Here is a 168-residue protein sequence, read N- to C-terminus: Transmembrane protein 229b (168 aa).

Topologically, residues 1 to 14 (MAPPEPLTALSRWY) are cytoplasmic. The helical transmembrane segment at 15-35 (LYAIHGYFCEVMFTAAWDFVV) threads the bilayer. Residues 36–40 (NYNWK) lie on the Extracellular side of the membrane. Residues 41–61 (FPGVTSVWALFIYGTSILIVE) form a helical membrane-spanning segment. Over 62–72 (KMYLYLKDKCN) the chain is Cytoplasmic. Residues 73-93 (ILIRCLIYTLWTYIWEFSTGL) form a helical membrane-spanning segment. Topologically, residues 94 to 109 (ILRQFNACPWDYSQFD) are extracellular. The chain crosses the membrane as a helical span at residues 110–130 (FDFMGLITLEYAIPWFCASFI). Topologically, residues 131-168 (MEQLVIRNTLRLRFDEHAEPGSPVMSTVSMANGHVKCN) are cytoplasmic.

The protein belongs to the TMEM229 family.

The protein localises to the membrane. The polypeptide is Transmembrane protein 229b (tmem229b) (Xenopus tropicalis (Western clawed frog)).